The chain runs to 492 residues: Phytoene desaturase (lycopene-forming) (492 aa).

5-38 (TVIGAGFGGLALAIRLQAAGIPVLLLEQRDKPGG) is an FAD binding site.

It belongs to the carotenoid/retinoid oxidoreductase family. FAD is required as a cofactor.

The protein resides in the cell membrane. The catalysed reaction is 15-cis-phytoene + 4 A = all-trans-lycopene + 4 AH2. It functions in the pathway carotenoid biosynthesis; lycopene biosynthesis. With respect to regulation, inhibited by NAD and NADP. In terms of biological role, converts 15-cis-phytoene into all-trans-lycopene via the intermediary of all-trans-phytofluene, all-trans-zeta-carotene and all-trans-neurosporene, by the introduction of four double bonds. The chain is Phytoene desaturase (lycopene-forming) (crtI) from Pantoea ananas (Erwinia uredovora).